The primary structure comprises 106 residues: Cell cycle protein GpsB (106 aa).

The stretch at leucine 34–glutamine 67 forms a coiled coil. Residues asparagine 55–aspartate 83 form a disordered region. A compositionally biased stretch (low complexity) spans serine 70–glutamine 79.

Belongs to the GpsB family. As to quaternary structure, forms polymers through the coiled coil domains. Interacts with PBP1, MreC and EzrA.

It is found in the cytoplasm. Divisome component that associates with the complex late in its assembly, after the Z-ring is formed, and is dependent on DivIC and PBP2B for its recruitment to the divisome. Together with EzrA, is a key component of the system that regulates PBP1 localization during cell cycle progression. Its main role could be the removal of PBP1 from the cell pole after pole maturation is completed. Also contributes to the recruitment of PBP1 to the division complex. Not essential for septum formation. The sequence is that of Cell cycle protein GpsB from Oceanobacillus iheyensis (strain DSM 14371 / CIP 107618 / JCM 11309 / KCTC 3954 / HTE831).